Here is a 383-residue protein sequence, read N- to C-terminus: tRNA-specific 2-thiouridylase MnmA (383 aa).

Residues 9–16 (GMSGGVDS) and Met-35 each bind ATP. Positions 95-97 (NPD) are interaction with target base in tRNA. Residue Cys-100 is the Nucleophile of the active site. Cys-100 and Cys-196 are disulfide-bonded. Residue Gly-124 coordinates ATP. The segment at 146–148 (KDQ) is interaction with tRNA. The active-site Cysteine persulfide intermediate is Cys-196. An interaction with tRNA region spans residues 308–309 (RY).

It belongs to the MnmA/TRMU family.

It is found in the cytoplasm. It catalyses the reaction S-sulfanyl-L-cysteinyl-[protein] + uridine(34) in tRNA + AH2 + ATP = 2-thiouridine(34) in tRNA + L-cysteinyl-[protein] + A + AMP + diphosphate + H(+). In terms of biological role, catalyzes the 2-thiolation of uridine at the wobble position (U34) of tRNA, leading to the formation of s(2)U34. This is tRNA-specific 2-thiouridylase MnmA from Burkholderia pseudomallei (strain 1106a).